We begin with the raw amino-acid sequence, 246 residues long: N-alpha-acetyltransferase 11 (246 aa).

An interaction with NAA15 region spans residues 1 to 58 (MNIRNARPEDLMNMQHCNLLCLPENYQMKYYFYHGLSWPQLSYIAEDEDGKIVGYVLA). Positions 1 to 152 (MNIRNARPED…DAYAMKRDLA (152 aa)) constitute an N-acetyltransferase domain. The disordered stretch occupies residues 175–246 (EENQEAQDST…DSSEYLDSTS (72 aa)). The segment covering 230–246 (SHSTDVQDSSEYLDSTS) has biased composition (polar residues).

The protein belongs to the acetyltransferase family. ARD1 subfamily. As to quaternary structure, component of the N-terminal acetyltransferase A (NatA) complex composed of NAA11 and NAA15. Interacts with HIF1A.

The protein resides in the cytoplasm. The protein localises to the nucleus. It carries out the reaction N-terminal glycyl-[protein] + acetyl-CoA = N-terminal N(alpha)-acetylglycyl-[protein] + CoA + H(+). The catalysed reaction is N-terminal L-alanyl-[protein] + acetyl-CoA = N-terminal N(alpha)-acetyl-L-alanyl-[protein] + CoA + H(+). The enzyme catalyses N-terminal L-seryl-[protein] + acetyl-CoA = N-terminal N(alpha)-acetyl-L-seryl-[protein] + CoA + H(+). It catalyses the reaction N-terminal L-valyl-[protein] + acetyl-CoA = N-terminal N(alpha)-acetyl-L-valyl-[protein] + CoA + H(+). It carries out the reaction N-terminal L-cysteinyl-[protein] + acetyl-CoA = N-terminal N(alpha)-acetyl-L-cysteinyl-[protein] + CoA + H(+). The catalysed reaction is N-terminal L-threonyl-[protein] + acetyl-CoA = N-terminal N(alpha)-acetyl-L-threonyl-[protein] + CoA + H(+). Its function is as follows. Displays alpha (N-terminal) acetyltransferase activity. Proposed alternative catalytic subunit of the N-terminal acetyltransferase A (NatA) complex. This chain is N-alpha-acetyltransferase 11 (Naa11), found in Rattus norvegicus (Rat).